A 357-amino-acid chain; its full sequence is 3-dehydroquinate synthase (357 aa).

Residues 104–108 (GVVGD), 128–129 (TT), Lys-141, and 168–171 (FLET) contribute to the NAD(+) site. Zn(2+) is bound by residues Glu-183, His-243, and His-260.

Belongs to the sugar phosphate cyclases superfamily. Dehydroquinate synthase family. Requires NAD(+) as cofactor. Co(2+) serves as cofactor. The cofactor is Zn(2+).

The protein resides in the cytoplasm. It catalyses the reaction 7-phospho-2-dehydro-3-deoxy-D-arabino-heptonate = 3-dehydroquinate + phosphate. The protein operates within metabolic intermediate biosynthesis; chorismate biosynthesis; chorismate from D-erythrose 4-phosphate and phosphoenolpyruvate: step 2/7. In terms of biological role, catalyzes the conversion of 3-deoxy-D-arabino-heptulosonate 7-phosphate (DAHP) to dehydroquinate (DHQ). The protein is 3-dehydroquinate synthase of Streptococcus pyogenes serotype M18 (strain MGAS8232).